Consider the following 165-residue polypeptide: MELHVRYEGDDDPEKCTARKLARFDLAALHRTGRETPAGVVLNPHAERALSPADDTDMLVALDCSWETAGRAMFEIDGEHRALPFLVAANPVNYGQPFQLNTVEAFAGALAILGRWERAEELLSKFTWGHTFLELNEEPLRRYADCEDSSEVVAVQQAYLDAGED.

Thr17, Leu62, Leu83, and Thr102 together coordinate S-adenosyl-L-methionine.

Belongs to the TDD superfamily. TSR3 family.

It is found in the cytoplasm. The enzyme catalyses an N(1)-methylpseudouridine in rRNA + S-adenosyl-L-methionine = N(1)-methyl-N(3)-[(3S)-3-amino-3-carboxypropyl]pseudouridine in rRNA + S-methyl-5'-thioadenosine + H(+). In terms of biological role, aminocarboxypropyltransferase that catalyzes the aminocarboxypropyl transfer on pseudouridine corresponding to position 914 in M.jannaschii 16S rRNA. It constitutes the last step in biosynthesis of the hypermodified N1-methyl-N3-(3-amino-3-carboxypropyl) pseudouridine (m1acp3-Psi). This chain is 16S rRNA aminocarboxypropyltransferase, found in Halobacterium salinarum (strain ATCC 700922 / JCM 11081 / NRC-1) (Halobacterium halobium).